The primary structure comprises 257 residues: Global transcriptional regulator CodY (257 aa).

The tract at residues 1-155 (MSLLSKTREL…AATVIGMEIL (155 aa)) is GAF domain. Positions 203–222 (ASKVADGVGITRSVIVNALR) form a DNA-binding region, H-T-H motif.

Belongs to the CodY family.

The protein resides in the cytoplasm. Its function is as follows. DNA-binding global transcriptional regulator which is involved in the adaptive response to starvation and acts by directly or indirectly controlling the expression of numerous genes in response to nutrient availability. During rapid exponential growth, CodY is highly active and represses genes whose products allow adaptation to nutrient depletion. The sequence is that of Global transcriptional regulator CodY from Staphylococcus aureus (strain bovine RF122 / ET3-1).